Here is a 636-residue protein sequence, read N- to C-terminus: Chaperone protein HtpG (636 aa).

The segment at 1-342 (MSGETLEFQA…AHDLSLNISR (342 aa)) is a; substrate-binding. The interval 343-558 (ELLQQDRQIQ…AHDVTPTLEK (216 aa)) is b. Positions 559-636 (MYRAMGHEVP…ILAERLARTL (78 aa)) are c.

This sequence belongs to the heat shock protein 90 family. Homodimer.

The protein resides in the cytoplasm. In terms of biological role, molecular chaperone. Has ATPase activity. This chain is Chaperone protein HtpG, found in Salinispora arenicola (strain CNS-205).